Reading from the N-terminus, the 116-residue chain is MKNRDIIVEAGSKVLRSTPRKLNLVADLVRNKKVSFANVQLRFCEKKAAGFIMKVLNSAIANAQNNYGLNVDNLYIKEILIGKSLTLRRVYPKAMGRANRMSKFYSNITIKLKEIV.

Belongs to the universal ribosomal protein uL22 family. As to quaternary structure, part of the 50S ribosomal subunit.

Functionally, this protein binds specifically to 23S rRNA; its binding is stimulated by other ribosomal proteins, e.g. L4, L17, and L20. It is important during the early stages of 50S assembly. It makes multiple contacts with different domains of the 23S rRNA in the assembled 50S subunit and ribosome. The globular domain of the protein is located near the polypeptide exit tunnel on the outside of the subunit, while an extended beta-hairpin is found that lines the wall of the exit tunnel in the center of the 70S ribosome. This Wolbachia pipientis subsp. Culex pipiens (strain wPip) protein is Large ribosomal subunit protein uL22.